The chain runs to 272 residues: Ribosomal RNA small subunit methyltransferase A (272 aa).

Residues Asn-20, Leu-22, Gly-47, Glu-68, Asp-93, and Asn-114 each coordinate S-adenosyl-L-methionine.

Belongs to the class I-like SAM-binding methyltransferase superfamily. rRNA adenine N(6)-methyltransferase family. RsmA subfamily.

The protein localises to the cytoplasm. It carries out the reaction adenosine(1518)/adenosine(1519) in 16S rRNA + 4 S-adenosyl-L-methionine = N(6)-dimethyladenosine(1518)/N(6)-dimethyladenosine(1519) in 16S rRNA + 4 S-adenosyl-L-homocysteine + 4 H(+). Functionally, specifically dimethylates two adjacent adenosines (A1518 and A1519) in the loop of a conserved hairpin near the 3'-end of 16S rRNA in the 30S particle. May play a critical role in biogenesis of 30S subunits. The chain is Ribosomal RNA small subunit methyltransferase A from Aliivibrio fischeri (strain ATCC 700601 / ES114) (Vibrio fischeri).